Reading from the N-terminus, the 2497-residue chain is Integrator complex subunit 1 homolog (2497 aa).

Residues 1–10 (MMLNKIKRSK) show a composition bias toward basic residues. 6 disordered regions span residues 1–151 (MMLN…NNNI), 300–337 (QPQP…IKKS), 946–965 (QQQQ…QQPT), 1028–1108 (TTTT…TSSS), 1234–1292 (INNN…NQKS), and 1572–1604 (NNNN…NNIT). Composition is skewed to low complexity over residues 37-46 (SDNNNNNSND), 60-151 (NNSI…NNNI), 305-333 (QQQQ…QPQQ), 946-963 (QQQQ…QQQQ), and 1028-1058 (TTTT…SSSL). The span at 1075 to 1091 (SGLSGSSNGINQSSDSI) shows a compositional bias: polar residues. Low complexity-rich tracts occupy residues 1097 to 1108 (STSPTTTTTSSS), 1234 to 1265 (INNN…NINK), 1272 to 1289 (HSNS…NKNN), and 1572 to 1602 (NNNN…NNNN). Positions 1645-1675 (RILKNTTQQKQQKQQQKESVQKSIQSLSKLI) form a coiled coil. A compositionally biased stretch (low complexity) spans 2084–2115 (QQQQQQQQQQQQQQKQQSNNSNNINNNNNNNN). Disordered regions lie at residues 2084 to 2123 (QQQQ…QKSK) and 2329 to 2350 (NNNN…NNNN).

This sequence belongs to the Integrator subunit 1 family. Component of the Integrator complex. The core complex associates with protein phosphatase 2A subunits to form the Integrator-PP2A (INTAC) complex.

It localises to the nucleus. Functionally, component of the integrator complex, a multiprotein complex that terminates RNA polymerase II (Pol II) transcription in the promoter-proximal region of genes. The integrator complex provides a quality checkpoint during transcription elongation by driving premature transcription termination of transcripts that are unfavorably configured for transcriptional elongation: the complex terminates transcription by (1) catalyzing dephosphorylation of the C-terminal domain (CTD) of Pol II subunit polr2a, (2) degrading the exiting nascent RNA transcript via endonuclease activity and (3) promoting the release of Pol II from bound DNA. The integrator complex is also involved in terminating the synthesis of non-coding Pol II transcripts, such as enhancer RNAs (eRNAs), small nuclear RNAs (snRNAs), telomerase RNAs and long non-coding RNAs (lncRNAs). This chain is Integrator complex subunit 1 homolog (ints1), found in Dictyostelium discoideum (Social amoeba).